Here is a 355-residue protein sequence, read N- to C-terminus: Epoxide hydrolase 2 (355 aa).

In terms of domain architecture, AB hydrolase-1 spans 78–323 (VLLMVHGFPE…IRGASHWVQQ (246 aa)). The active-site Nucleophile is the D152. The active-site Proton donor is Y263. Catalysis depends on H319, which acts as the Proton acceptor.

Belongs to the AB hydrolase superfamily. Epoxide hydrolase family.

The enzyme catalyses an epoxide + H2O = an ethanediol. It participates in lipid metabolism. Its function is as follows. Catalyzes the hydrolysis of epoxide-containing fatty acids. Active in vitro against trans-1,3-diphenylpropene oxide (t-DPPO), epoxyeicosatrienoic acids (EETs) including 8,9-EET, 11,12-EET and 14,15-EET and the linoleic acid metabolites 12,13-epoxy-9-octadecenoate (12,13-EpOME) and 9,10-epoxy-12-octadecenoate (9,10-EpOME). The protein is Epoxide hydrolase 2 of Caenorhabditis elegans.